A 95-amino-acid polypeptide reads, in one-letter code: Protein ECS1 (95 aa).

An N-terminal signal peptide occupies residues 1 to 27; that stretch reads MASSIVSSMFLFLLLLLVFPHIDNVLG.

As to expression, expressed in leaves, flowers and stems, but not in roots.

It is found in the secreted. Its subcellular location is the cell wall. Functionally, maybe involved in defense responses to X.campestris, but probably not a X.campestris pv. campestris race 750 (e.g. Xcc750) resistance gene; according to genetic data, linked to a locus influencing resistance to Xcc750. This chain is Protein ECS1, found in Arabidopsis thaliana (Mouse-ear cress).